Here is a 139-residue protein sequence, read N- to C-terminus: Endocuticle structural glycoprotein SgAbd-8 (139 aa).

Q1 is subject to Pyrrolidone carboxylic acid. T14 carries an O-linked (HexNAc...) threonine glycan. The O-linked (HexNAc...) serine glycan is linked to S15. In terms of domain architecture, Chitin-binding type R&amp;R spans 29-99; sequence DGSYAWSYET…PEGAHLPTPP (71 aa). O-linked (HexNAc...) threonine glycosylation is present at T97. Positions 111 to 139 are disordered; the sequence is FIASQPQQPGNNGGGQFPRPQPFPRPGAF. The span at 129–139 shows a compositional bias: pro residues; sequence RPQPFPRPGAF.

Functionally, component of the abdominal endocuticle. This chain is Endocuticle structural glycoprotein SgAbd-8, found in Schistocerca gregaria (Desert locust).